The sequence spans 472 residues: MTGTPDVFPPATPGGAPLVALPAGPRKPDQVKGKLYIKTHGCQMNEYDSAKMADVLAASDGLELTDTPEDADVILVNTCSIREKAQEKVFSQLGVWKGLKNKGREVIIGVGGCVASQEGEAIIKRAPFVDLVFGPQTLHRLPELIRARREQKRPQVDISFPEIEKFDRLPEPRAEGASAFVSIMEGCSKYCSFCVVPYTRGTEVSRPFEDVVVEVAQLAAQGVREINLLGQNVNAYRGPYGDGEFADLGLLIRTIAEIDGVGRIRFTTSHPLEFSDSLIDAFRDVPQLANFLHLPVQAGSDRVLSAMKRGYTALEFKSKIRKLRAVRPDISISSDFIVGFPGETDADFEKTMKLIEDIGFDHSFSFIYSRRPGTPAADLEDTISDAEKHARLSRLQERINAHAAGISEKMVGTVQTVLVEGPSRKNPNELTGKTENMRSVNFPAPARLIGQFVDVVITEALTNSLRARVVAE.

Residues methionine 1 to glycine 24 are disordered. The region spanning glycine 33–glutamate 150 is the MTTase N-terminal domain. [4Fe-4S] cluster-binding residues include cysteine 42, cysteine 79, cysteine 113, cysteine 187, cysteine 191, and cysteine 194. The region spanning arginine 173–serine 407 is the Radical SAM core domain. In terms of domain architecture, TRAM spans glutamate 408–alanine 471.

It belongs to the methylthiotransferase family. MiaB subfamily. Monomer. [4Fe-4S] cluster serves as cofactor.

It is found in the cytoplasm. The catalysed reaction is N(6)-dimethylallyladenosine(37) in tRNA + (sulfur carrier)-SH + AH2 + 2 S-adenosyl-L-methionine = 2-methylsulfanyl-N(6)-dimethylallyladenosine(37) in tRNA + (sulfur carrier)-H + 5'-deoxyadenosine + L-methionine + A + S-adenosyl-L-homocysteine + 2 H(+). Functionally, catalyzes the methylthiolation of N6-(dimethylallyl)adenosine (i(6)A), leading to the formation of 2-methylthio-N6-(dimethylallyl)adenosine (ms(2)i(6)A) at position 37 in tRNAs that read codons beginning with uridine. This chain is tRNA-2-methylthio-N(6)-dimethylallyladenosine synthase, found in Stenotrophomonas maltophilia (strain K279a).